Consider the following 1224-residue polypeptide: DNA-directed RNA polymerase subunit beta' (1224 aa).

The Zn(2+) site is built by cysteine 60, cysteine 62, cysteine 75, and cysteine 78. The Mg(2+) site is built by aspartate 449, aspartate 451, and aspartate 453. The Zn(2+) site is built by cysteine 819, cysteine 893, cysteine 900, and cysteine 903.

The protein belongs to the RNA polymerase beta' chain family. The RNAP catalytic core consists of 2 alpha, 1 beta, 1 beta' and 1 omega subunit. When a sigma factor is associated with the core the holoenzyme is formed, which can initiate transcription. Mg(2+) is required as a cofactor. Zn(2+) serves as cofactor.

The catalysed reaction is RNA(n) + a ribonucleoside 5'-triphosphate = RNA(n+1) + diphosphate. Functionally, DNA-dependent RNA polymerase catalyzes the transcription of DNA into RNA using the four ribonucleoside triphosphates as substrates. In Lactobacillus johnsonii (strain CNCM I-12250 / La1 / NCC 533), this protein is DNA-directed RNA polymerase subunit beta'.